The chain runs to 930 residues: Serine/threonine-protein kinase ATG1 (930 aa).

In terms of domain architecture, Protein kinase spans 23-326 (FIIDREIGKG…FENFFAHHVV (304 aa)). ATP contacts are provided by residues 29–37 (IGKGSFAQV) and lysine 52. Residue aspartate 166 is the Proton acceptor of the active site. 4 disordered regions span residues 336 to 468 (DDIP…TEEE), 504 to 563 (GQNN…SASP), 853 to 874 (ISSG…DTEE), and 904 to 930 (NQAK…YGST). The span at 337–350 (DIPKPPKRELETIR) shows a compositional bias: basic and acidic residues. Residues 377–393 (SPKSPRSSPRSSTVNSS) are compositionally biased toward low complexity. Composition is skewed to polar residues over residues 400 to 417 (RQSQ…HNSG) and 504 to 531 (GQNN…TTGA). An ATG13-binding region spans residues 629–897 (AAQAIEEFAT…RLNMVRKKQQ (269 aa)).

This sequence belongs to the protein kinase superfamily. Ser/Thr protein kinase family. APG1/unc-51/ULK1 subfamily. In terms of assembly, homodimer. Dimerization requires the presence of ATG13. Forms a ternary complex with ATG13 and ATG17.

Its subcellular location is the cytoplasm. The protein localises to the preautophagosomal structure membrane. The enzyme catalyses L-seryl-[protein] + ATP = O-phospho-L-seryl-[protein] + ADP + H(+). The catalysed reaction is L-threonyl-[protein] + ATP = O-phospho-L-threonyl-[protein] + ADP + H(+). Its function is as follows. Serine/threonine protein kinase involved in the cytoplasm to vacuole transport (Cvt) and found to be essential in autophagy, where it is required for the formation of autophagosomes. Involved in the clearance of protein aggregates which cannot be efficiently cleared by the proteasome. Required for selective autophagic degradation of the nucleus (nucleophagy) as well as for mitophagy which contributes to regulate mitochondrial quantity and quality by eliminating the mitochondria to a basal level to fulfill cellular energy requirements and preventing excess ROS production. Also involved in endoplasmic reticulum-specific autophagic process, in selective removal of ER-associated degradation (ERAD) substrates. Plays a key role in ATG9 and ATG23 cycling through the pre-autophagosomal structure and is necessary to promote ATG18 binding to ATG9 through phosphorylation of ATG9. Catalyzes phosphorylation of ATG4, decreasing the interaction between ATG4 and ATG8 and impairing deconjugation of PE-conjugated forms of ATG8. Contributes to conidiation by regulating the conidial levels of the conidiation-related protein CP15 and mediates fungal oxidation resistance by controlling total superoxide dismutase (SOD) activity. The polypeptide is Serine/threonine-protein kinase ATG1 (Beauveria bassiana (strain ARSEF 2860) (White muscardine disease fungus)).